A 280-amino-acid chain; its full sequence is Ribonuclease P protein subunit p38 (280 aa).

Residue alanine 2 is modified to N-acetylalanine. 3 positions are modified to phosphoserine: serine 12, serine 221, and serine 230. Residues 202-227 form a disordered region; it reads WLPDRTQGPTDSLETEPSESQDNEIL. Over residues 214–226 the composition is skewed to acidic residues; sequence LETEPSESQDNEI. A disordered region spans residues 254–280; sequence QPLKIKKLIPNPSKIRKPPKSKKSISK. Residues 267–280 show a composition bias toward basic residues; that stretch reads KIRKPPKSKKSISK.

The protein belongs to the eukaryotic ribosomal protein eL8 family. In terms of assembly, component of nuclear RNase P and RNase MRP ribonucleoproteins. RNase P consists of a catalytic RNA moiety and about 10 protein subunits; POP1, POP4, POP5, POP7, RPP14, RPP21, RPP25, RPP30, RPP38 and RPP40. Within the RNase P complex, POP1, POP7 and RPP25 form the 'finger' subcomplex, POP5, RPP14, RPP40 and homodimeric RPP30 form the 'palm' subcomplex, and RPP21, POP4 and RPP38 form the 'wrist' subcomplex. All subunits of the RNase P complex interact with the catalytic RNA. Several subunits of RNase P are also part of the RNase MRP complex. RNase MRP consists of a catalytic RNA moiety and about 8 protein subunits; POP1, POP7, RPP25, RPP30, RPP38, RPP40 and possibly also POP4 and POP5.

The protein localises to the nucleus. It is found in the nucleolus. Component of ribonuclease P, a ribonucleoprotein complex that generates mature tRNA molecules by cleaving their 5'-ends. Also a component of the MRP ribonuclease complex, which cleaves pre-rRNA sequences. This chain is Ribonuclease P protein subunit p38 (Rpp38), found in Mus musculus (Mouse).